The chain runs to 489 residues: Tripartite motif-containing protein 10 (489 aa).

An RING-type zinc finger spans residues Cys-16–Lys-61. A B box-type zinc finger spans residues Glu-94–Leu-135. The Zn(2+) site is built by Cys-99, His-102, Cys-121, and His-127. The stretch at Glu-144–Thr-180 forms a coiled coil. The region spanning Gln-292–Val-486 is the B30.2/SPRY domain.

Belongs to the TRIM/RBCC family. As to quaternary structure, interacts with IFNAR1; this interaction prevents association of IFNAR1 with TYK2. In terms of tissue distribution, expressed in embryonic liver.

The protein localises to the cytoplasm. E3 ligase that plays an essential role in the differentiation and survival of terminal erythroid cells. May directly bind to PTEN and promote its ubiquitination, resulting in its proteasomal degradation and activation of hypertrophic signaling. In addition, plays a role in immune response regulation by repressing the phosphorylation of STAT1 and STAT2 in the interferon/JAK/STAT signaling pathway independent of its E3 ligase activity. Mechanistically, interacts with the intracellular domain of IFNAR1 and thereby inhibits the association between TYK2 and IFNAR1. The sequence is that of Tripartite motif-containing protein 10 (Trim10) from Mus musculus (Mouse).